The sequence spans 531 residues: NAD(P)H-quinone oxidoreductase chain 4 (531 aa).

14 helical membrane-spanning segments follow: residues 9–29 (FPWLSASILFPIGSAFVIPFF), 41–61 (FALSIALITFLITVGSYINGF), 93–113 (MPLILLTSFITALAVLAAWPV), 117–137 (PKLFFFLILVMDGGQIAVFAV), 141–161 (LLFFLTWELELIPVYLLLAIW), 173–193 (FIIYTAGSSIFILLAALAMGF), 217–237 (IFCYVGLLIAFGVKLPIVPLH), 248–268 (TAPVHMLLAGILLKMGGYALL), 282–302 (FAPLLIVLGVVNIIYAALTSF), 311–331 (IAYSSISHMGFVLIGIGSFSS), 337–357 (AMLQMVSHGLIGASLFFLVGA), 381–401 (FALWTACSLASLALPGMSGFV), 422–442 (VVMASLAAIGVILTPIYLLSM), and 469–489 (VYIIACLLLPIIGIGLYPRLV).

This sequence belongs to the complex I subunit 4 family.

Its subcellular location is the cellular thylakoid membrane. The enzyme catalyses a plastoquinone + NADH + (n+1) H(+)(in) = a plastoquinol + NAD(+) + n H(+)(out). The catalysed reaction is a plastoquinone + NADPH + (n+1) H(+)(in) = a plastoquinol + NADP(+) + n H(+)(out). Functionally, NDH-1 shuttles electrons from NAD(P)H, via FMN and iron-sulfur (Fe-S) centers, to quinones in the respiratory chain. The immediate electron acceptor for the enzyme in this species is believed to be plastoquinone. Couples the redox reaction to proton translocation (for every two electrons transferred, four hydrogen ions are translocated across the cytoplasmic membrane), and thus conserves the redox energy in a proton gradient. This chain is NAD(P)H-quinone oxidoreductase chain 4, found in Prochlorococcus marinus (strain MIT 9301).